Reading from the N-terminus, the 351-residue chain is N-acetyl-gamma-glutamyl-phosphate reductase (351 aa).

Cys-154 is an active-site residue.

The protein belongs to the NAGSA dehydrogenase family. Type 1 subfamily.

The protein resides in the cytoplasm. The catalysed reaction is N-acetyl-L-glutamate 5-semialdehyde + phosphate + NADP(+) = N-acetyl-L-glutamyl 5-phosphate + NADPH + H(+). The protein operates within amino-acid biosynthesis; L-arginine biosynthesis; N(2)-acetyl-L-ornithine from L-glutamate: step 3/4. Its function is as follows. Catalyzes the NADPH-dependent reduction of N-acetyl-5-glutamyl phosphate to yield N-acetyl-L-glutamate 5-semialdehyde. The protein is N-acetyl-gamma-glutamyl-phosphate reductase of Prochlorococcus marinus (strain MIT 9515).